The primary structure comprises 893 residues: TBC domain-containing protein kinase-like protein (893 aa).

Positions 1–273 (MFPLKDAEMG…PDELMKDQVF (273 aa)) constitute a Protein kinase domain. A Rab-GAP TBC domain is found at 466-651 (DIPPLMRGLT…HLWDTLLLGN (186 aa)).

Belongs to the protein kinase superfamily. In terms of assembly, component of the FERRY complex composed of five subunits, TBCK, PPP1R21, FERRY3, CRYZL1 and GATD1 with a ratio of 1:2:1:2:4, respectively.

The protein resides in the cytoplasm. It localises to the cytoskeleton. Its subcellular location is the spindle. The protein localises to the midbody. It is found in the early endosome. In terms of biological role, component of the FERRY complex (Five-subunit Endosomal Rab5 and RNA/ribosome intermediary). The FERRY complex directly interacts with mRNAs and RAB5A, and functions as a RAB5A effector involved in the localization and the distribution of specific mRNAs most likely by mediating their endosomal transport. The complex recruits mRNAs and ribosomes to early endosomes through direct mRNA-interaction. Also involved in the modulation of mTOR signaling and expression of mTOR complex components. Involved in the control of actin-cytoskeleton organization. This is TBC domain-containing protein kinase-like protein (Tbck) from Mus musculus (Mouse).